Here is a 262-residue protein sequence, read N- to C-terminus: WUSCHEL-related homeobox 11 (262 aa).

Residues methionine 1–alanine 11 show a composition bias toward basic and acidic residues. 2 disordered regions span residues methionine 1 to serine 21 and arginine 79 to glycine 115. The homeobox DNA-binding region spans proline 18 to glutamine 82. A compositionally biased stretch (low complexity) spans glutamine 84–glycine 112.

The protein belongs to the WUS homeobox family. In terms of assembly, interacts with ERF3.

It is found in the nucleus. Its function is as follows. Transcription factor which may be involved in developmental processes. Promotes the development of crown roots (both initiation and elongation), main components of the fibrous root system, by regulating the expression of genes required for crown root development and hormone-responsive genes involved in cytokinin (e.g. RR1, RR2, RR3 and RR4) and auxin (e.g. IAA5, IAA11, IAA23 and IAA31) signaling. The sequence is that of WUSCHEL-related homeobox 11 from Oryza sativa subsp. indica (Rice).